We begin with the raw amino-acid sequence, 427 residues long: Imidazolonepropionase (427 aa).

Fe(3+)-binding residues include His78 and His80. His78 and His80 together coordinate Zn(2+). Residues Arg87, Tyr150, and His183 each contribute to the 4-imidazolone-5-propanoate site. Tyr150 contacts N-formimidoyl-L-glutamate. His255 contacts Fe(3+). Residue His255 coordinates Zn(2+). Glu258 provides a ligand contact to 4-imidazolone-5-propanoate. Position 330 (Asp330) interacts with Fe(3+). Asp330 contacts Zn(2+). The N-formimidoyl-L-glutamate site is built by Asn332 and Gly334. Residue Thr335 coordinates 4-imidazolone-5-propanoate.

This sequence belongs to the metallo-dependent hydrolases superfamily. HutI family. The cofactor is Zn(2+). Fe(3+) is required as a cofactor.

It localises to the cytoplasm. It carries out the reaction 4-imidazolone-5-propanoate + H2O = N-formimidoyl-L-glutamate. The protein operates within amino-acid degradation; L-histidine degradation into L-glutamate; N-formimidoyl-L-glutamate from L-histidine: step 3/3. In terms of biological role, catalyzes the hydrolytic cleavage of the carbon-nitrogen bond in imidazolone-5-propanoate to yield N-formimidoyl-L-glutamate. It is the third step in the universal histidine degradation pathway. The protein is Imidazolonepropionase of Herpetosiphon aurantiacus (strain ATCC 23779 / DSM 785 / 114-95).